A 124-amino-acid chain; its full sequence is Fluoride-specific ion channel FluC (124 aa).

4 helical membrane-spanning segments follow: residues 5 to 25 (FLQVALGGALGSAARYGVNIL), 35 to 55 (LGTLSVNIAGCLAMGLLAALL), 63 to 83 (LAPFLLTGMLGGFTTFSAFAL), and 98 to 118 (LGYVLGSVVLSLAAVIAGLTV). The Na(+) site is built by Gly73 and Thr76.

This sequence belongs to the fluoride channel Fluc/FEX (TC 1.A.43) family.

The protein resides in the cell inner membrane. It catalyses the reaction fluoride(in) = fluoride(out). Na(+) is not transported, but it plays an essential structural role and its presence is essential for fluoride channel function. Fluoride-specific ion channel. Important for reducing fluoride concentration in the cell, thus reducing its toxicity. The chain is Fluoride-specific ion channel FluC from Paracoccus denitrificans (strain Pd 1222).